A 136-amino-acid polypeptide reads, in one-letter code: Putative pre-16S rRNA nuclease (136 aa).

Belongs to the YqgF nuclease family.

Its subcellular location is the cytoplasm. Functionally, could be a nuclease involved in processing of the 5'-end of pre-16S rRNA. This is Putative pre-16S rRNA nuclease from Francisella tularensis subsp. holarctica (strain FTNF002-00 / FTA).